The primary structure comprises 1402 residues: Roundabout homolog 3 (1402 aa).

Residues 1–20 (MLRYLLKTLLQMNLFADSLA) form the signal peptide. The Extracellular segment spans residues 21–891 (RDISNSSELL…ERLAKVLRKP (871 aa)). N-linked (GlcNAc...) asparagine glycosylation is found at Asn25, Asn34, and Asn53. Ig-like C2-type domains follow at residues 64–160 (PRIV…ASLE), 166–253 (DDFR…AELV), 258–342 (PSFL…GSLS), 347–440 (PQFV…ALLE), and 450–531 (PPII…GEAT). The cysteines at positions 85 and 143 are disulfide-linked. A glycan (N-linked (GlcNAc...) asparagine) is linked at Asn156. 2 cysteine pairs are disulfide-bonded: Cys187–Cys236 and Cys279–Cys326. Residues Asn355, Asn363, Asn410, Asn459, and Asn503 are each glycosylated (N-linked (GlcNAc...) asparagine). Cys368 and Cys424 form a disulfide bridge. A disulfide bridge connects residues Cys472 and Cys521. Disordered stretches follow at residues 540–561 (EDWGASPGPATGPSNPPGPPSQ) and 639–662 (EPSPVSEPVQTQDSSLSRPAEDPW). Over residues 543-552 (GASPGPATGP) the composition is skewed to low complexity. 3 Fibronectin type-III domains span residues 558–652 (PPSQ…TQDS), 672–766 (AVRM…IPEE), and 771–869 (PPQG…FPPA). Residues 646 to 655 (PVQTQDSSLS) are compositionally biased toward polar residues. N-linked (GlcNAc...) asparagine glycans are attached at residues Asn784, Asn813, and Asn820. Residues 892–912 (AFLAGSSAACGALLLGFCAAL) form a helical membrane-spanning segment. Residues 913–1402 (YRRQKQRKEL…PGRNRREEPR (490 aa)) lie on the Cytoplasmic side of the membrane. 3 disordered regions span residues 965–989 (SWPHPPRSPSAQEPRGSCCPSNPDP), 1032–1307 (FHGG…VVQA), and 1340–1402 (GRPS…EEPR). Composition is skewed to polar residues over residues 1038 to 1049 (QHSSGDPSTWSQ) and 1142 to 1152 (PSPTSSYGQQS). A compositionally biased stretch (pro residues) spans 1158–1169 (PSPPDPPQPPTD). 2 stretches are compositionally biased toward low complexity: residues 1178–1191 (RRVPLGPSSPLSVS) and 1215–1228 (ASPSPVPSTASSAP). Over residues 1243 to 1254 (HGHRARIRKKPK) the composition is skewed to basic residues. Ser1263 carries the phosphoserine modification. Residues 1294 to 1304 (LERERSGERRV) show a composition bias toward basic and acidic residues. Residues 1346–1357 (SHGQGTSTCSTA) show a composition bias toward polar residues. The span at 1358–1371 (GSNSSRGSNSSRGS) shows a compositional bias: low complexity.

This sequence belongs to the immunoglobulin superfamily. ROBO family. Interacts (via Fibronectin type-III 1 domain) with NELL2 (via the EGF domains) with a 3:3 stoichiometry; this interaction promotes oligomerization of ROBO3 resulting in the repulsion of commissural axons in the midline. Detected in embryonal spinal cord and hindbrain.

The protein resides in the membrane. Functionally, receptor involved in axon guidance during development. Acts as a multifunctional regulator of pathfinding that simultaneously mediates NELL2 repulsion, inhibits SLIT repulsion, and facilitates Netrin-1/NTN1 attraction. In spinal cord development plays a role in guiding commissural axons probably by preventing premature sensitivity to Slit proteins thus inhibiting Slit signaling through ROBO1/ROBO2. Binding OF NELL2 to the receptor ROBO3 promotes oligomerization of ROBO3, resulting in the repulsion of commissural axons in the midline. ROBO3 also indirectly boosts axon attraction to NTN1 without interacting with NTN1 itself. Its function is as follows. Mediates NELL2 premature repulsion of commissural axons during midline crossing. In terms of biological role, after midline crossing by the commissural axons, may, in concert with ROBO1 and ROBO2, prevent midline recrossing. Does not mediate NELL2 signaling. This Mus musculus (Mouse) protein is Roundabout homolog 3.